The following is a 328-amino-acid chain: D-cysteine desulfhydrase (328 aa).

The residue at position 51 (Lys-51) is an N6-(pyridoxal phosphate)lysine.

The protein belongs to the ACC deaminase/D-cysteine desulfhydrase family. Homodimer. Pyridoxal 5'-phosphate serves as cofactor.

It catalyses the reaction D-cysteine + H2O = hydrogen sulfide + pyruvate + NH4(+) + H(+). Catalyzes the alpha,beta-elimination reaction of D-cysteine and of several D-cysteine derivatives. It could be a defense mechanism against D-cysteine. The protein is D-cysteine desulfhydrase of Salmonella typhi.